Consider the following 197-residue polypeptide: NADH-quinone oxidoreductase subunit C (197 aa).

Belongs to the complex I 30 kDa subunit family. As to quaternary structure, NDH-1 is composed of 14 different subunits. Subunits NuoB, C, D, E, F, and G constitute the peripheral sector of the complex.

Its subcellular location is the cell inner membrane. It catalyses the reaction a quinone + NADH + 5 H(+)(in) = a quinol + NAD(+) + 4 H(+)(out). NDH-1 shuttles electrons from NADH, via FMN and iron-sulfur (Fe-S) centers, to quinones in the respiratory chain. The immediate electron acceptor for the enzyme in this species is believed to be ubiquinone. Couples the redox reaction to proton translocation (for every two electrons transferred, four hydrogen ions are translocated across the cytoplasmic membrane), and thus conserves the redox energy in a proton gradient. This Rickettsia prowazekii (strain Madrid E) protein is NADH-quinone oxidoreductase subunit C.